We begin with the raw amino-acid sequence, 291 residues long: 33 kDa chaperonin (291 aa).

Cystine bridges form between Cys235/Cys237 and Cys268/Cys271.

The protein belongs to the HSP33 family. Under oxidizing conditions two disulfide bonds are formed involving the reactive cysteines. Under reducing conditions zinc is bound to the reactive cysteines and the protein is inactive.

It is found in the cytoplasm. Its function is as follows. Redox regulated molecular chaperone. Protects both thermally unfolding and oxidatively damaged proteins from irreversible aggregation. Plays an important role in the bacterial defense system toward oxidative stress. The protein is 33 kDa chaperonin of Bacillus subtilis (strain 168).